The following is a 140-amino-acid chain: Protein archease (140 aa).

Ca(2+)-binding residues include Asp12, Asp139, and Leu140.

Belongs to the archease family.

Its function is as follows. Activates the tRNA-splicing ligase complex by facilitating the enzymatic turnover of catalytic subunit RtcB. Acts by promoting the guanylylation of RtcB, a key intermediate step in tRNA ligation. Can also alter the NTP specificity of RtcB such that ATP, dGTP or ITP is used efficiently. May also act as a chaperone or modulator of proteins involved in DNA or RNA processing. The protein is Protein archease of Methanothermobacter thermautotrophicus (strain ATCC 29096 / DSM 1053 / JCM 10044 / NBRC 100330 / Delta H) (Methanobacterium thermoautotrophicum).